Here is a 424-residue protein sequence, read N- to C-terminus: UPF0597 protein Sputw3181_2955 (424 aa).

The protein belongs to the UPF0597 family.

The chain is UPF0597 protein Sputw3181_2955 from Shewanella sp. (strain W3-18-1).